The sequence spans 179 residues: Large ribosomal subunit protein uL6 (179 aa).

It belongs to the universal ribosomal protein uL6 family. As to quaternary structure, part of the 50S ribosomal subunit.

In terms of biological role, this protein binds to the 23S rRNA, and is important in its secondary structure. It is located near the subunit interface in the base of the L7/L12 stalk, and near the tRNA binding site of the peptidyltransferase center. This is Large ribosomal subunit protein uL6 from Mycobacteroides abscessus (strain ATCC 19977 / DSM 44196 / CCUG 20993 / CIP 104536 / JCM 13569 / NCTC 13031 / TMC 1543 / L948) (Mycobacterium abscessus).